A 218-amino-acid polypeptide reads, in one-letter code: MNLIFLGPPGAGKGTYAKRVVEKYIIPHISTGDIFREAIAKGTELGRKVQDIVNSGNLVPDELTNALVEERLKQDDCKKGFILDGYPRTLNQAQALNEMLKKMGKELDGAIYFEVDEETVVQRISTRRVCSKCGKVYNVITLPSKVEGICDDCGGTLIQRDDDKEDIVRSRYRVYIEKTSPLIEYYKNQNKLFTLDGRKSVEEVMKILFNILGGFEKK.

Residue 10 to 15 (GAGKGT) participates in ATP binding. Residues 30-59 (STGDIFREAIAKGTELGRKVQDIVNSGNLV) form an NMP region. Residues Thr-31, Arg-36, 57–59 (NLV), 85–88 (GYPR), and Gln-92 contribute to the AMP site. The tract at residues 126-163 (TRRVCSKCGKVYNVITLPSKVEGICDDCGGTLIQRDDD) is LID. Arg-127 is a binding site for ATP. Zn(2+) is bound by residues Cys-130 and Cys-133. 136–137 (VY) is an ATP binding site. Zn(2+)-binding residues include Cys-150 and Cys-153. 2 residues coordinate AMP: Arg-160 and Arg-171. An ATP-binding site is contributed by Lys-199.

This sequence belongs to the adenylate kinase family. As to quaternary structure, monomer.

The protein localises to the cytoplasm. The enzyme catalyses AMP + ATP = 2 ADP. It functions in the pathway purine metabolism; AMP biosynthesis via salvage pathway; AMP from ADP: step 1/1. Functionally, catalyzes the reversible transfer of the terminal phosphate group between ATP and AMP. Plays an important role in cellular energy homeostasis and in adenine nucleotide metabolism. This chain is Adenylate kinase, found in Fervidobacterium nodosum (strain ATCC 35602 / DSM 5306 / Rt17-B1).